The primary structure comprises 571 residues: Putative clathrin assembly protein At2g01600 (571 aa).

The ENTH domain occupies 24–161; sequence RVNSEYADLD…ECFRVLKYDT (138 aa). 2 disordered regions span residues 325–346 and 474–571; these read YRPDDGLTTEDTEPSHEEREML and PAPN…TGLI. Residues 337–346 show a composition bias toward basic and acidic residues; the sequence is EPSHEEREML. Positions 508 to 522 are enriched in low complexity; it reads QQTYQHQPQPTYQHQ. Composition is skewed to polar residues over residues 523–532 and 543–571; these read SNPPTNNSNP and PVSQQPNTSGYGDFSVNQHNNPFRSTGLI.

Its subcellular location is the membrane. The protein localises to the clathrin-coated pit. It localises to the golgi apparatus. It is found in the cytoplasmic vesicle. The protein resides in the clathrin-coated vesicle. This is Putative clathrin assembly protein At2g01600 from Arabidopsis thaliana (Mouse-ear cress).